A 407-amino-acid polypeptide reads, in one-letter code: Probable NADPH dehydrogenase (407 aa).

Residues Thr49 and Gln124 each coordinate FMN. The active-site Proton donor is the Tyr206. Residues Arg254 and Arg357 each coordinate FMN.

It belongs to the NADH:flavin oxidoreductase/NADH oxidase family. It depends on FMN as a cofactor.

The enzyme catalyses A + NADPH + H(+) = AH2 + NADP(+). Its function is as follows. Oxidoreductase that binds mammalian estrogens with high affinity. In Candida albicans (strain SC5314 / ATCC MYA-2876) (Yeast), this protein is Probable NADPH dehydrogenase.